The sequence spans 160 residues: Endoribonuclease YbeY (160 aa).

Zn(2+)-binding residues include His123, His127, and His133.

It belongs to the endoribonuclease YbeY family. The cofactor is Zn(2+).

It is found in the cytoplasm. Single strand-specific metallo-endoribonuclease involved in late-stage 70S ribosome quality control and in maturation of the 3' terminus of the 16S rRNA. This chain is Endoribonuclease YbeY, found in Shouchella clausii (strain KSM-K16) (Alkalihalobacillus clausii).